Reading from the N-terminus, the 1140-residue chain is MATPGMSWQQHYYGGSAAKFAPSPATAQLAGHSMDYSQEMHLKMSKKIAQLTKVIYALNTKNDEHESAIQALKDAHEEEIQQILAETREKILQYKSKVTEELDLRRKIQVLESSLEDHIKMKQQALTEFEAYKHRVEDMQLCAEAQHVQRIVTMSREVEEIRRKFEEKLRSFGQLQVQFEKDKRLALEDLQAAHRREIQELLKSQQDHSASVNKGQEKAEELHRMEVESLNKMLEELRLERKKLIEDYEGKLNKAQSFYERELDTLKRSQLFTAESLQASKEKEADLRKEFQGQEAILRKTIGKLKTELQMVQDEAGSLLDKCQKLQTALAIAENNVQVLQKQLDDAKEGEMALLSKHKEVESELAAARERLQQQASDLVLKASHIGMLQATQMTQEVTIKDLESEKSRVNERLSQLEEERAFLRSKTQSLDEEQKQQILELEKKVNEAKRTQQEYYERELKNLQSRLEEEVTQLNEAHSKTLEELAWKHHMAIEAVHSNAIRDKKKLQMDLEEQHNKDKLNLEEDKNQLQQELENLKEVLEDKLNTANQEIGHLQDMVRKSEQGLGSAEGLIASLQDSQERLQNELDLTKDSLKETKDALLNVEGELEQERQQHEETIAAMKEEEKLKVDKMAHDLEIKWTENLRQECSKLREELRLQHEEDKKSAMSQLLQLKDREKNAARDSWQKKVEDLLNQISLLKQNLEIQLSQSQTSLQQLQAQFTQERQRLTQELEELEEQHQQRHKSLKEAHVLAFQTMEEEKEKEQRALENHLQQKHSAELQSLKDAHRESMEGFRIEMEQELQTLRFELEDEGKAMLASLRSELNHQHAAAIDLLRHNHHQELAAAKMELERSIDISRRQSKEHICRITDLQEELRHREHHISELDKEVQHLHENISALTKELEFKGKEILRIRSESNQQIRLHEQDLNKRLEKELDVMTADHLREKNIMRADFNKTNELLKEINAALQVSLEEMEEKYLMRESKPEDIQMITELKAMLTERDQIIKKLIEDNKFYQLELVNRETNFNKVFNSSPTVGVINPLAKQKKKNDKSPTNRFVSVPNLSALESGGVGNGHPNRLDPIPNSPVHDIEFNSSKPLPQPVPPKGPKTFLSPAQSEASPVASPDPQRQEWFARYFTF.

Coiled coils occupy residues 57–256, 296–800, and 868–907; these read ALNT…NKAQ, AILR…IEME, and RITD…LEFK. Residues 1063-1128 form a disordered region; it reads PNLSALESGG…EASPVASPDP (66 aa).

It belongs to the FAM184 family.

The protein localises to the cytoplasm. The protein resides in the P-body. Its subcellular location is the cytoskeleton. It localises to the microtubule organizing center. It is found in the centrosome. The protein localises to the centriolar satellite. The polypeptide is Protein FAM184A (Homo sapiens (Human)).